The chain runs to 78 residues: RNA-binding protein KhpA (78 aa).

The KH domain maps to 29–78; it reads TIIYELTVAKGDIGKIIGKEGRTIKAIRTLLVSVASRDNVKVSLEIMEER.

This sequence belongs to the KhpA RNA-binding protein family.

It is found in the cytoplasm. Its function is as follows. A probable RNA-binding protein. This is RNA-binding protein KhpA from Chlamydia trachomatis serovar D (strain ATCC VR-885 / DSM 19411 / UW-3/Cx).